Consider the following 669-residue polypeptide: Elongation factor G 2 (669 aa).

The region spanning 1-276 (MGIRNIGIMA…SIVDYLPSPF (276 aa)) is the tr-type G domain. GTP contacts are provided by residues 10-17 (AHIDAGKT), 74-78 (DTPGH), and 128-131 (NKMD).

This sequence belongs to the TRAFAC class translation factor GTPase superfamily. Classic translation factor GTPase family. EF-G/EF-2 subfamily.

The protein localises to the cytoplasm. Catalyzes the GTP-dependent ribosomal translocation step during translation elongation. During this step, the ribosome changes from the pre-translocational (PRE) to the post-translocational (POST) state as the newly formed A-site-bound peptidyl-tRNA and P-site-bound deacylated tRNA move to the P and E sites, respectively. Catalyzes the coordinated movement of the two tRNA molecules, the mRNA and conformational changes in the ribosome. This is Elongation factor G 2 (fusA2) from Borreliella afzelii (strain PKo) (Borrelia afzelii).